The chain runs to 129 residues: Small ribosomal subunit protein uS8 (129 aa).

The protein belongs to the universal ribosomal protein uS8 family. In terms of assembly, part of the 30S ribosomal subunit.

One of the primary rRNA binding proteins, it binds directly to 16S rRNA central domain where it helps coordinate assembly of the platform of the 30S subunit. The sequence is that of Small ribosomal subunit protein uS8 from Thermofilum pendens (strain DSM 2475 / Hrk 5).